We begin with the raw amino-acid sequence, 129 residues long: uncharacterized protein (129 aa).

It is found in the cytoplasm. The protein localises to the cytosol. Its subcellular location is the nucleus. This is an uncharacterized protein from Schizosaccharomyces pombe (strain 972 / ATCC 24843) (Fission yeast).